Consider the following 314-residue polypeptide: Malate dehydrogenase (314 aa).

NAD(+) contacts are provided by residues 11–16 (GSGNIG) and Asp-35. Arg-84 and Arg-90 together coordinate substrate. Residues Asn-97 and 120–122 (ITN) contribute to the NAD(+) site. Residues Asn-122 and Arg-153 each coordinate substrate. Catalysis depends on His-177, which acts as the Proton acceptor.

This sequence belongs to the LDH/MDH superfamily. MDH type 3 family.

The catalysed reaction is (S)-malate + NAD(+) = oxaloacetate + NADH + H(+). In terms of biological role, catalyzes the reversible oxidation of malate to oxaloacetate. The sequence is that of Malate dehydrogenase from Rickettsia bellii (strain RML369-C).